A 97-amino-acid chain; its full sequence is Nucleoid-associated protein Hac_0048 (97 aa).

This sequence belongs to the YbaB/EbfC family. Homodimer.

It localises to the cytoplasm. The protein localises to the nucleoid. Binds to DNA and alters its conformation. May be involved in regulation of gene expression, nucleoid organization and DNA protection. This Helicobacter acinonychis (strain Sheeba) protein is Nucleoid-associated protein Hac_0048.